The primary structure comprises 239 residues: Ribonuclease 3 (239 aa).

One can recognise an RNase III domain in the interval 18–141 (YTTLEKALGY…LMAGVYLEAG (124 aa)). Residue Glu-54 participates in Mg(2+) binding. Asp-58 is an active-site residue. The Mg(2+) site is built by Ser-127 and Glu-130. Glu-130 is a catalytic residue. Residues 168-237 (DYKTALQELT…AYYALQKLKE (70 aa)) form the DRBM domain.

This sequence belongs to the ribonuclease III family. Homodimer. Mg(2+) is required as a cofactor.

Its subcellular location is the cytoplasm. It carries out the reaction Endonucleolytic cleavage to 5'-phosphomonoester.. Digests double-stranded RNA. Involved in the processing of primary rRNA transcript to yield the immediate precursors to the large and small rRNAs (23S and 16S). Processes some mRNAs, and tRNAs when they are encoded in the rRNA operon. Processes pre-crRNA and tracrRNA of type II CRISPR loci if present in the organism. The sequence is that of Ribonuclease 3 from Helicobacter pylori (strain G27).